The sequence spans 59 residues: Antibacterial peptide enbocin (59 aa).

A signal peptide spans 1 to 20 (MNFTRIIFFLFVVVFATASG). A propeptide is located at residue Lys-21. Position 58 is a serine amide (Ser-58).

It belongs to the cecropin family.

It is found in the secreted. Has antibacterial activity against Gram-positive and Gram-negative bacteria. The polypeptide is Antibacterial peptide enbocin (Bombyx mori (Silk moth)).